Here is a 188-residue protein sequence, read N- to C-terminus: Elongation factor P (188 aa).

This sequence belongs to the elongation factor P family.

Its subcellular location is the cytoplasm. The protein operates within protein biosynthesis; polypeptide chain elongation. Functionally, involved in peptide bond synthesis. Stimulates efficient translation and peptide-bond synthesis on native or reconstituted 70S ribosomes in vitro. Probably functions indirectly by altering the affinity of the ribosome for aminoacyl-tRNA, thus increasing their reactivity as acceptors for peptidyl transferase. The polypeptide is Elongation factor P (Caulobacter vibrioides (strain ATCC 19089 / CIP 103742 / CB 15) (Caulobacter crescentus)).